The primary structure comprises 276 residues: Short-chain dehydrogenase/reductase ATR10 (276 aa).

NADP(+) is bound by residues I29, S51, D78, and N105. The Proton donor role is filled by S161. 2 residues coordinate NADP(+): K185 and T214. K185 (lowers pKa of active site Tyr) is an active-site residue.

Belongs to the short-chain dehydrogenases/reductases (SDR) family.

The protein operates within mycotoxin biosynthesis. Short-chain dehydrogenase/reductase; part of the core atranone cluster (CAC) which products are predicted to catalyze most or all steps of mycotoxin atranone synthesis, starting from geranylgeranyl pyrophosphate (GGPP). The initial cyclization of GGPP to dolabellane is probably performed by the terpene cyclase ATR13. The Baeyer-Villiger oxidation near the end of the atranone synthesis, which converts atranones D and E to atranones F and G is predicted to be catalyzed by the monooxygenase ATR8. Of the CAC's other predicted gene products, the reducing PKS ATR6 might synthesize a polyketide chain. This polyketide is probably transferred onto the atranone backbone by the polyketide transferase ATR5. Other predicted CAC products include 4 oxygenases (ATR2, ATR3, ATR4, and ATR14), 3 short-chain reductases (ATR7, ATR9, and ATR10), and a methyltransferase (ATR12). These may all be involved in the various steps of atranone biosynthesis, although their specific roles must await experimental determination. In Stachybotrys chlorohalonatus (strain IBT 40285), this protein is Short-chain dehydrogenase/reductase ATR10.